We begin with the raw amino-acid sequence, 196 residues long: ATP-dependent Clp protease proteolytic subunit (196 aa).

Catalysis depends on Ser98, which acts as the Nucleophile. The active site involves His123.

It belongs to the peptidase S14 family. Fourteen ClpP subunits assemble into 2 heptameric rings which stack back to back to give a disk-like structure with a central cavity, resembling the structure of eukaryotic proteasomes.

Its subcellular location is the cytoplasm. It carries out the reaction Hydrolysis of proteins to small peptides in the presence of ATP and magnesium. alpha-casein is the usual test substrate. In the absence of ATP, only oligopeptides shorter than five residues are hydrolyzed (such as succinyl-Leu-Tyr-|-NHMec, and Leu-Tyr-Leu-|-Tyr-Trp, in which cleavage of the -Tyr-|-Leu- and -Tyr-|-Trp bonds also occurs).. Its function is as follows. Cleaves peptides in various proteins in a process that requires ATP hydrolysis. Has a chymotrypsin-like activity. Plays a major role in the degradation of misfolded proteins. This chain is ATP-dependent Clp protease proteolytic subunit, found in Sulfurimonas denitrificans (strain ATCC 33889 / DSM 1251) (Thiomicrospira denitrificans (strain ATCC 33889 / DSM 1251)).